The sequence spans 374 residues: Protein-glutamate methylesterase/protein-glutamine glutaminase (374 aa).

The region spanning 4 to 121 is the Response regulatory domain; the sequence is KVLVVDDSGF…SRNPDKVKQM (118 aa). Asp55 is subject to 4-aspartylphosphate. Positions 144–186 are disordered; it reads PVAAPVPASSPAPASSFASPAPARPAATARAAAPAASHSPAPK. Residues 154-183 show a composition bias toward low complexity; sequence PAPASSFASPAPARPAATARAAAPAASHSP. The 192-residue stretch at 183–374 folds into the CheB-type methylesterase domain; that stretch reads PAPKRKPYKL…IGKHLVEACV (192 aa). Residues Ser198, His225, and Asp318 contribute to the active site.

This sequence belongs to the CheB family. Post-translationally, phosphorylated by CheA. Phosphorylation of the N-terminal regulatory domain activates the methylesterase activity.

Its subcellular location is the cytoplasm. The catalysed reaction is [protein]-L-glutamate 5-O-methyl ester + H2O = L-glutamyl-[protein] + methanol + H(+). It catalyses the reaction L-glutaminyl-[protein] + H2O = L-glutamyl-[protein] + NH4(+). In terms of biological role, involved in chemotaxis. Part of a chemotaxis signal transduction system that modulates chemotaxis in response to various stimuli. Catalyzes the demethylation of specific methylglutamate residues introduced into the chemoreceptors (methyl-accepting chemotaxis proteins or MCP) by CheR. Also mediates the irreversible deamidation of specific glutamine residues to glutamic acid. The polypeptide is Protein-glutamate methylesterase/protein-glutamine glutaminase (Pseudomonas putida (Arthrobacter siderocapsulatus)).